A 921-amino-acid polypeptide reads, in one-letter code: Guanylate kinase-associated protein mars (921 aa).

At Ser-49 the chain carries Phosphoserine. Thr-51 carries the post-translational modification Phosphothreonine. A phosphoserine mark is found at Ser-76 and Ser-170. Tyr-172 is subject to Phosphotyrosine. Disordered regions lie at residues 179-208 and 273-325; these read GKGK…TVAA and RPTP…PLGN. Low complexity-rich tracts occupy residues 193–208 and 273–285; these read KPTS…TVAA and RPTP…AKTP. Position 444 is a phosphoserine (Ser-444). A disordered region spans residues 500 to 531; that stretch reads QTTVKEDTGDSTLVPEGTKTPPRRESNGMPNY. At Thr-519 the chain carries Phosphothreonine. Phosphoserine is present on Ser-554. 2 disordered regions span residues 641 to 660 and 743 to 763; these read AGAT…SKPV and TKVE…RHSS. 2 positions are modified to phosphoserine: Ser-785 and Ser-792. 2 disordered regions span residues 809-833 and 861-921; these read QNAA…TKRQ and ETVG…SEFM. Thr-826 bears the Phosphothreonine mark. Polar residues predominate over residues 878–907; the sequence is EASTESGSLEQNPGRDSNQENEATPRTYTL.

It belongs to the SAPAP family. As to expression, expressed in the central nervous system and at different stages of gametogenesis. In embryos, it is expressed in central nervous system and brain. In testis, it is strongly expressed in pre-meiotic germ cells, but is not found in somatic or post-meiotic cells.

It is found in the cell membrane. The protein resides in the nucleus. Its subcellular location is the nucleoplasm. The protein localises to the cytoplasm. It localises to the cytoskeleton. It is found in the spindle. Cell cycle regulator. This Drosophila melanogaster (Fruit fly) protein is Guanylate kinase-associated protein mars (mars).